The chain runs to 555 residues: MVKRGKKTKYLFVTGGVVSSLGKGLSAASIGALLENRGLEVQHLKLDPYINVDPGTMSPFQHGEVFVTDDGAETDLDLGHYERFTSAKMTRRNNYTTGRIYQNVIQRERRGEYLGKTVQVIPHITDEIKAVIREAAGGADILIVEVGGTVGDIESLPFLEAIRQMKYDVGEENAVYAHLTLVPFIAAAGELKTKPTQHSVKELREIGIQPDLLLCRSDREIPRDMKDKIALFCNVDPSAVFTALDVPSIYEVPLSLHREGLDDKLAELFNIWSRAPRLERWETIVDKVKNPRRGEVRIGIVGKYVELHESYKSLNEALVHGGIANDARVKLAFIDSTKLEEGDLSDLEKVDAILVPGGFGIRGTEGKILGVKYAREHKVPFFGICLGLQMAVIEMARNVLGLAGANSLEFDEQTPHPVVTLMEGQKGVTDKGGTMRLGAYPCALKEGTKARALYGADLVHERHRHRFEFNNDYRAQFEAAGMVFSGVNPDLGLVEMIELPGQHFVGCQFHPEFRSKPFAPHPLFAGFVKAALEHRDAQQRQPPAEVKKLAVGKNG.

The tract at residues 1 to 271 (MVKRGKKTKY…DDKLAELFNI (271 aa)) is amidoligase domain. S19 serves as a coordination point for CTP. S19 contributes to the UTP binding site. ATP is bound by residues 20–25 (SLGKGL) and D77. 2 residues coordinate Mg(2+): D77 and E145. Residues 152–154 (DIE), 192–197 (KTKPTQ), and K228 contribute to the CTP site. UTP contacts are provided by residues 192–197 (KTKPTQ) and K228. In terms of domain architecture, Glutamine amidotransferase type-1 spans 297–537 (RIGIVGKYVE…VKAALEHRDA (241 aa)). G358 contributes to the L-glutamine binding site. The Nucleophile; for glutamine hydrolysis role is filled by C385. Residues 386 to 389 (LGLQ), E409, and R466 contribute to the L-glutamine site. Catalysis depends on residues H510 and E512. Residues 535 to 555 (RDAQQRQPPAEVKKLAVGKNG) are disordered.

It belongs to the CTP synthase family. In terms of assembly, homotetramer.

It catalyses the reaction UTP + L-glutamine + ATP + H2O = CTP + L-glutamate + ADP + phosphate + 2 H(+). It carries out the reaction L-glutamine + H2O = L-glutamate + NH4(+). The catalysed reaction is UTP + NH4(+) + ATP = CTP + ADP + phosphate + 2 H(+). It participates in pyrimidine metabolism; CTP biosynthesis via de novo pathway; CTP from UDP: step 2/2. Its activity is regulated as follows. Allosterically activated by GTP, when glutamine is the substrate; GTP has no effect on the reaction when ammonia is the substrate. The allosteric effector GTP functions by stabilizing the protein conformation that binds the tetrahedral intermediate(s) formed during glutamine hydrolysis. Inhibited by the product CTP, via allosteric rather than competitive inhibition. In terms of biological role, catalyzes the ATP-dependent amination of UTP to CTP with either L-glutamine or ammonia as the source of nitrogen. Regulates intracellular CTP levels through interactions with the four ribonucleotide triphosphates. In Anaeromyxobacter dehalogenans (strain 2CP-1 / ATCC BAA-258), this protein is CTP synthase.